Reading from the N-terminus, the 481-residue chain is Zinc metalloproteinase/disintegrin (481 aa).

The signal sequence occupies residues 1 to 20 (MIQVLLVTICLAVFPYQGSS). Positions 21-190 (IILESGNVDD…KASQLYLTPE (170 aa)) are excised as a propeptide. A Peptidase M12B domain is found at 197–392 (RYIKLAIVVD…DNPQCILNAP (196 aa)). 3 disulfide bridges follow: Cys308–Cys387, Cys349–Cys371, and Cys351–Cys354. A Zn(2+)-binding site is contributed by His333. Residue Glu334 is part of the active site. Zn(2+)-binding residues include His337 and His343. A propeptide spanning residues 393–408 (LRTDTVSTPVSGNEFL) is cleaved from the precursor. The 82-residue stretch at 400–481 (TPVSGNEFLE…ADCPRNGLYS (82 aa)) folds into the Disintegrin domain. 6 disulfide bridges follow: Cys414–Cys429, Cys416–Cys424, Cys423–Cys446, Cys437–Cys443, Cys442–Cys467, and Cys455–Cys474. A Cell attachment site motif is present at residues 459–461 (RGD).

The protein belongs to the venom metalloproteinase (M12B) family. P-II subfamily. P-IIa sub-subfamily. Monomer. Zn(2+) serves as cofactor. In terms of tissue distribution, expressed by the venom gland.

Its subcellular location is the secreted. In terms of biological role, impairs hemostasis in the envenomed animal. Its function is as follows. Inhibits platelet aggregation induced by ADP, thrombin, platelet-activating factor and collagen. Acts by inhibiting fibrinogen interaction with platelet receptors GPIIb/GPIIIa (ITGA2B/ITGB3). This is Zinc metalloproteinase/disintegrin from Protobothrops elegans (Elegant pitviper).